A 264-amino-acid chain; its full sequence is Propanediol uptake facilitator PduF (264 aa).

A run of 2 helical transmembrane segments spans residues 10 to 30 and 42 to 62; these read GAEFLGTGLFLFFGIGCLSAL and ICIIWGLGISLAVYLTAGISG. An NPA 1 motif is present at residues 66–68; the sequence is NPA. 3 helical membrane-spanning segments follow: residues 84–104, 143–163, and 179–199; these read VLPYIIAQFAGAFGGALLAYV, VWQAALVEVVITSILMGMIMA, and LLIGILVAVIGASTGPLTGFA. The short motif at 201–203 is the NPA 2 element; the sequence is NPA. The helical transmembrane segment at 228 to 248 threads the bilayer; that stretch reads IPYFIVPIVAPVIGACAGAAI.

Belongs to the MIP/aquaporin (TC 1.A.8) family.

It localises to the cell inner membrane. Probably facilitates diffusion of 1,2-propanediol (1,2-PD) into the cell. Modeling suggests active transport of 1,2-PD is required at low extracellular concentrations to allow maximal growth and saturation of PduP/PduQ within the bacterial microcompartment (BMC); this protein may be the cellular transporter. Its function is as follows. The 1,2-PD-specific bacterial microcompartment (BMC) concentrates low levels of 1,2-PD catabolic enzymes, concentrates volatile reaction intermediates thus enhancing pathway flux and keeps the level of toxic, mutagenic propionaldehyde low. In Salmonella typhimurium (strain LT2 / SGSC1412 / ATCC 700720), this protein is Propanediol uptake facilitator PduF.